The following is a 227-amino-acid chain: C4-dicarboxylate TRAP transporter small permease protein DctQ (227 aa).

At 1–7 (MLRILDR) the chain is on the cytoplasmic side. The helical transmembrane segment at 8 to 28 (AEEVLIAALIATATVLIFVSV) threads the bilayer. The Periplasmic segment spans residues 29 to 67 (THRFTLGFVADFVGFFRGHGMTGAAAAAKSLYTTLRGIN). The helical transmembrane segment at 68–88 (LVWAQELCIILFVWMAKFGAA) threads the bilayer. Over 89 to 112 (YGVRTGIHVGIDVLINRLDAPKRR) the chain is Cytoplasmic. Residues 113–133 (FFILLGLGAGALFTGIIATLG) traverse the membrane as a helical segment. Residues 134–149 (ANFVLHMYHASSTSPD) are Periplasmic-facing. Residues 150 to 170 (LELPMWLVYLAIPMGSSLMCF) form a helical membrane-spanning segment. Topologically, residues 171–227 (RFLQVAFGFARTGELPHHDHGHVDGVDTENEGIDAEGDVLLHSPLTPRDLVEKPKDN) are cytoplasmic.

The protein belongs to the TRAP transporter small permease family. As to quaternary structure, the complex comprises the extracytoplasmic solute receptor protein DctP, and the two transmembrane proteins DctQ and DctM.

It localises to the cell inner membrane. Functionally, part of the tripartite ATP-independent periplasmic (TRAP) transport system DctPQM involved in C4-dicarboxylates uptake. The polypeptide is C4-dicarboxylate TRAP transporter small permease protein DctQ (Rhodobacter capsulatus (Rhodopseudomonas capsulata)).